Here is a 729-residue protein sequence, read N- to C-terminus: Fatty acid oxidation complex subunit alpha (729 aa).

An enoyl-CoA hydratase/isomerase region spans residues 1–189; it reads MLYKGDTLYL…KIGLVDGVVK (189 aa). Substrate is bound at residue aspartate 296. Residues 311-729 form a 3-hydroxyacyl-CoA dehydrogenase region; the sequence is ETPKQAAVLG…ARPVGSLKTA (419 aa). NAD(+) is bound by residues methionine 324, aspartate 343, 400–402, lysine 407, and serine 429; that span reads VVE. The active-site For 3-hydroxyacyl-CoA dehydrogenase activity is histidine 450. Position 453 (asparagine 453) interacts with NAD(+). 2 residues coordinate substrate: asparagine 500 and tyrosine 660. The segment at 707 to 729 is disordered; the sequence is TRHNEPYYPPVEPARPVGSLKTA.

In the N-terminal section; belongs to the enoyl-CoA hydratase/isomerase family. It in the C-terminal section; belongs to the 3-hydroxyacyl-CoA dehydrogenase family. Heterotetramer of two alpha chains (FadB) and two beta chains (FadA).

It carries out the reaction a (3S)-3-hydroxyacyl-CoA + NAD(+) = a 3-oxoacyl-CoA + NADH + H(+). It catalyses the reaction a (3S)-3-hydroxyacyl-CoA = a (2E)-enoyl-CoA + H2O. The catalysed reaction is a 4-saturated-(3S)-3-hydroxyacyl-CoA = a (3E)-enoyl-CoA + H2O. The enzyme catalyses (3S)-3-hydroxybutanoyl-CoA = (3R)-3-hydroxybutanoyl-CoA. It carries out the reaction a (3Z)-enoyl-CoA = a 4-saturated (2E)-enoyl-CoA. It catalyses the reaction a (3E)-enoyl-CoA = a 4-saturated (2E)-enoyl-CoA. Its pathway is lipid metabolism; fatty acid beta-oxidation. Involved in the aerobic and anaerobic degradation of long-chain fatty acids via beta-oxidation cycle. Catalyzes the formation of 3-oxoacyl-CoA from enoyl-CoA via L-3-hydroxyacyl-CoA. It can also use D-3-hydroxyacyl-CoA and cis-3-enoyl-CoA as substrate. The polypeptide is Fatty acid oxidation complex subunit alpha (Salmonella typhi).